Consider the following 541-residue polypeptide: 2-hydroxyacylsphingosine 1-beta-galactosyltransferase (541 aa).

Positions 1-20 (MKSYTPYFILLWSAVGIAKA) are cleaved as a signal peptide. 3 N-linked (GlcNAc...) asparagine glycosylation sites follow: Asn-78, Asn-333, and Asn-442. A helical membrane pass occupies residues 472-492 (YFLLDIAFVLLLGAALLYFLL).

The protein belongs to the UDP-glycosyltransferase family.

Its subcellular location is the membrane. The protein localises to the endoplasmic reticulum. It carries out the reaction an N-acylsphing-4-enine + UDP-alpha-D-galactose = a beta-D-galactosyl-(1&lt;-&gt;1')-N-acylsphing-4-enine + UDP + H(+). The catalysed reaction is an N-acyl-sphingoid base + UDP-alpha-D-galactose = a D-galactosylceramide + UDP + H(+). It catalyses the reaction N-(2-hydroxy-hexanoyl)-sphing-4-enine + UDP-alpha-D-galactose = N-(2-hydroxy-hexanoyl)-beta-D-galactosyl-sphing-4-enine + UDP + H(+). The enzyme catalyses N-(2-hydroxy-hexanoyl)-sphinganine + UDP-alpha-D-galactose = N-(2-hydroxyhexanoyl)-beta-D-galactosylsphinganine + UDP + H(+). The protein operates within sphingolipid metabolism; galactosylceramide biosynthesis. Catalyzes the transfer of galactose to ceramide, a key enzymatic step in the biosynthesis of galactocerebrosides, which are abundant sphingolipids of the myelin membrane of the central nervous system and peripheral nervous system. Galactosylates both hydroxy- and non-hydroxy fatty acid-containing ceramides and diglycerides. This chain is 2-hydroxyacylsphingosine 1-beta-galactosyltransferase, found in Homo sapiens (Human).